A 220-amino-acid polypeptide reads, in one-letter code: Phosphatidylserine decarboxylase proenzyme (220 aa).

Serine 188 acts as the Schiff-base intermediate with substrate; via pyruvic acid in catalysis. Serine 188 carries the post-translational modification Pyruvic acid (Ser); by autocatalysis.

Belongs to the phosphatidylserine decarboxylase family. PSD-A subfamily. In terms of assembly, heterodimer of a large membrane-associated beta subunit and a small pyruvoyl-containing alpha subunit. Pyruvate is required as a cofactor. Post-translationally, is synthesized initially as an inactive proenzyme. Formation of the active enzyme involves a self-maturation process in which the active site pyruvoyl group is generated from an internal serine residue via an autocatalytic post-translational modification. Two non-identical subunits are generated from the proenzyme in this reaction, and the pyruvate is formed at the N-terminus of the alpha chain, which is derived from the carboxyl end of the proenzyme. The post-translation cleavage follows an unusual pathway, termed non-hydrolytic serinolysis, in which the side chain hydroxyl group of the serine supplies its oxygen atom to form the C-terminus of the beta chain, while the remainder of the serine residue undergoes an oxidative deamination to produce ammonia and the pyruvoyl prosthetic group on the alpha chain.

The protein localises to the cell membrane. The enzyme catalyses a 1,2-diacyl-sn-glycero-3-phospho-L-serine + H(+) = a 1,2-diacyl-sn-glycero-3-phosphoethanolamine + CO2. It participates in phospholipid metabolism; phosphatidylethanolamine biosynthesis; phosphatidylethanolamine from CDP-diacylglycerol: step 2/2. Functionally, catalyzes the formation of phosphatidylethanolamine (PtdEtn) from phosphatidylserine (PtdSer). This chain is Phosphatidylserine decarboxylase proenzyme, found in Parabacteroides distasonis (strain ATCC 8503 / DSM 20701 / CIP 104284 / JCM 5825 / NCTC 11152).